A 425-amino-acid polypeptide reads, in one-letter code: Enolase (425 aa).

Q162 provides a ligand contact to (2R)-2-phosphoglycerate. E204 functions as the Proton donor in the catalytic mechanism. Positions 241, 284, and 311 each coordinate Mg(2+). Positions 336, 365, 366, and 387 each coordinate (2R)-2-phosphoglycerate. The active-site Proton acceptor is the K336.

It belongs to the enolase family. Mg(2+) serves as cofactor.

It is found in the cytoplasm. It localises to the secreted. The protein localises to the cell surface. It carries out the reaction (2R)-2-phosphoglycerate = phosphoenolpyruvate + H2O. Its pathway is carbohydrate degradation; glycolysis; pyruvate from D-glyceraldehyde 3-phosphate: step 4/5. In terms of biological role, catalyzes the reversible conversion of 2-phosphoglycerate (2-PG) into phosphoenolpyruvate (PEP). It is essential for the degradation of carbohydrates via glycolysis. This is Enolase from Brucella abortus (strain S19).